The following is a 70-amino-acid chain: Conotoxin Im23.4 (70 aa).

The signal sequence occupies residues 1 to 22 (MIMRMTLTLFVLVVMTAASASG). Positions 23-30 (DALTEAKR) are excised as a propeptide. Intrachain disulfides connect Cys34-Cys41, Cys45-Cys53, and Cys54-Cys69.

The protein belongs to the conotoxin K superfamily. As to expression, expressed by the venom duct.

It localises to the secreted. Functionally, probable neurotoxin. The chain is Conotoxin Im23.4 from Conus imperialis (Imperial cone).